A 396-amino-acid chain; its full sequence is MKFLYLFLFAVFAWTSDAIVRIPLKKFRSIRRTLSDSGLNVEQLLAGTNSLQHNQGFPSSNAPTPETLKNYMDAQYYGEIGLGTPVQMFTVVFDTGSSNLWLPSIHCSFTDIACLLHHKYNGAKSSTYVKNGTEFAIQYGSGSLSGYLSQDSCTIGDIVVEKQLFGEAIKQPGVAFIAAKFDGILGMAYPRISVDGVPPVFDMMMSQKKVEQNVFSFYLNRNPDTEPGGELLLGGTDPKYYTGDFNYVPVTRQAYWQIHMDGMSIGSQLTLCKDGCEAIVDTGTSLITGPPAEVRALQKAIGAIPLIQGEYMIDCKKVPTLPTISFNVGGKTYSLTGEQYVLKESQGGKTICLSGLMGLEIPPPAGPLWILGDVFIGQYYTVFDRESNRVGFAKST.

Residues 1–18 (MKFLYLFLFAVFAWTSDA) form the signal peptide. Residues 19–61 (IVRIPLKKFRSIRRTLSDSGLNVEQLLAGTNSLQHNQGFPSSN) constitute a propeptide, activation peptide. A Peptidase A1 domain is found at 76 to 393 (YYGEIGLGTP…DRESNRVGFA (318 aa)). Residue aspartate 94 is part of the active site. A disulfide bond links cysteine 107 and cysteine 114. An N-linked (GlcNAc...) asparagine glycan is attached at asparagine 131. A disulfide bridge connects residues cysteine 272 and cysteine 276. Aspartate 281 is a catalytic residue. Cysteine 315 and cysteine 352 are oxidised to a cystine.

It belongs to the peptidase A1 family. In terms of assembly, monomer.

Its subcellular location is the lysosome. The enzyme catalyses Specificity similar to, but narrower than, that of pepsin A. Does not cleave the 4-Gln-|-His-5 bond in B chain of insulin.. Its activity is regulated as follows. Inhibited by pepstatin. In terms of biological role, acid protease active in intracellular protein breakdown. In Clupea harengus (Atlantic herring), this protein is Cathepsin D (ctsd).